Here is a 70-residue protein sequence, read N- to C-terminus: MMFRVTSVGCFLLVILSLNLVVLTNACLSEGSPCSMSGSCCHKSCCRSTCTFPCLIPGKRAKLREFFRQR.

Residues 1 to 26 (MMFRVTSVGCFLLVILSLNLVVLTNA) form the signal peptide. 4 cysteine pairs are disulfide-bonded: Cys-27–Cys-41, Cys-34–Cys-46, Cys-40–Cys-50, and Cys-45–Cys-54. A Proline amide modification is found at Pro-57. A propeptide spanning residues 61–70 (AKLREFFRQR) is cleaved from the precursor.

Belongs to the conotoxin I2 superfamily. As to expression, expressed by the venom duct.

It is found in the secreted. The sequence is that of Conotoxin Ep11.12 from Conus episcopatus (Bishop's cone).